A 190-amino-acid chain; its full sequence is ATP synthase subunit b 1 (190 aa).

Residues 35-55 form a helical membrane-spanning segment; sequence DFVVLLGFLLFLAILFYFGVP.

The protein belongs to the ATPase B chain family. As to quaternary structure, F-type ATPases have 2 components, F(1) - the catalytic core - and F(0) - the membrane proton channel. F(1) has five subunits: alpha(3), beta(3), gamma(1), delta(1), epsilon(1). F(0) has three main subunits: a(1), b(2) and c(10-14). The alpha and beta chains form an alternating ring which encloses part of the gamma chain. F(1) is attached to F(0) by a central stalk formed by the gamma and epsilon chains, while a peripheral stalk is formed by the delta and b chains.

It localises to the cell inner membrane. F(1)F(0) ATP synthase produces ATP from ADP in the presence of a proton or sodium gradient. F-type ATPases consist of two structural domains, F(1) containing the extramembraneous catalytic core and F(0) containing the membrane proton channel, linked together by a central stalk and a peripheral stalk. During catalysis, ATP synthesis in the catalytic domain of F(1) is coupled via a rotary mechanism of the central stalk subunits to proton translocation. In terms of biological role, component of the F(0) channel, it forms part of the peripheral stalk, linking F(1) to F(0). This is ATP synthase subunit b 1 from Jannaschia sp. (strain CCS1).